Reading from the N-terminus, the 324-residue chain is Olfactory receptor 52N5 (324 aa).

The Extracellular segment spans residues 1–33 (MPLFNSLCWFPTIHVTPPSFILNGIPGLERVHV). Residues 34 to 54 (WISLPLCTMYIIFLVGNLGLV) traverse the membrane as a helical segment. Residues 55–62 (YLIYYEES) are Cytoplasmic-facing. A helical membrane pass occupies residues 63 to 84 (LHHPMYFFFGHALSLIDLLTCT). Topologically, residues 85–108 (TTLPNALCIFWFSLKEINFNACLA) are extracellular. A disulfide bond links Cys106 and Cys198. The helical transmembrane segment at 109–129 (QMFFVHGFTGVESGVLMLMAL) threads the bilayer. The Cytoplasmic portion of the chain corresponds to 130 to 148 (DRYVAICYPLRYATTLTNP). A helical membrane pass occupies residues 149-169 (IIAKAELATFLRGVLLMIPFP). At 170–205 (FLVKRLPFCQSNIISHTYCDHMSVVKLSCASIKVNV) the chain is on the extracellular side. Residues 206–226 (IYGLMVALLIGVFDICCISLS) traverse the membrane as a helical segment. Topologically, residues 227-246 (YTLILKAAISLSSSDARQKA) are cytoplasmic. A helical transmembrane segment spans residues 247 to 267 (FSTCTAHISAIIITYVPAFFT). At 268–283 (FFAHRFGGHTIPPSLH) the chain is on the extracellular side. A helical transmembrane segment spans residues 284 to 304 (IIVANLYLLLPPTLNPIVYGV). At 305-324 (KTKQIRKSVIKFFQGDKGAG) the chain is on the cytoplasmic side.

It belongs to the G-protein coupled receptor 1 family.

The protein resides in the cell membrane. Functionally, odorant receptor. This chain is Olfactory receptor 52N5 (OR52N5), found in Homo sapiens (Human).